The chain runs to 141 residues: Large ribosomal subunit protein uL16 (141 aa).

A compositionally biased stretch (basic residues) spans Met1–Met17. A disordered region spans residues Met1–Asn29.

The protein belongs to the universal ribosomal protein uL16 family. As to quaternary structure, part of the 50S ribosomal subunit.

Its function is as follows. Binds 23S rRNA and is also seen to make contacts with the A and possibly P site tRNAs. The sequence is that of Large ribosomal subunit protein uL16 from Flavobacterium johnsoniae (strain ATCC 17061 / DSM 2064 / JCM 8514 / BCRC 14874 / CCUG 350202 / NBRC 14942 / NCIMB 11054 / UW101) (Cytophaga johnsonae).